The primary structure comprises 313 residues: Malate dehydrogenase (313 aa).

Residue 11–16 (GAGHTG) coordinates NAD(+). Substrate-binding residues include R86 and R92. Residues N99 and 122-124 (LTN) contribute to the NAD(+) site. 2 residues coordinate substrate: N124 and R155. Residue H179 is the Proton acceptor of the active site.

The protein belongs to the LDH/MDH superfamily. MDH type 3 family.

The enzyme catalyses (S)-malate + NAD(+) = oxaloacetate + NADH + H(+). Its function is as follows. Catalyzes the reversible oxidation of malate to oxaloacetate. This is Malate dehydrogenase from Staphylococcus epidermidis (strain ATCC 35984 / DSM 28319 / BCRC 17069 / CCUG 31568 / BM 3577 / RP62A).